The primary structure comprises 259 residues: 5'-nucleotidase SurE (259 aa).

The a divalent metal cation site is built by Asp8, Asp9, Ser41, and Asn93.

This sequence belongs to the SurE nucleotidase family. The cofactor is a divalent metal cation.

The protein localises to the cytoplasm. It catalyses the reaction a ribonucleoside 5'-phosphate + H2O = a ribonucleoside + phosphate. Its function is as follows. Nucleotidase that shows phosphatase activity on nucleoside 5'-monophosphates. The sequence is that of 5'-nucleotidase SurE from Verminephrobacter eiseniae (strain EF01-2).